Consider the following 142-residue polypeptide: MKTFSAKPHEVQRDWFVVDGTDKVLGRLAAEVARRLRGKHKAIYTPHVDTGDYIVVVNVDKLRVTGNKALDKKYYRHSGYPGGIYETNFTKLQQRFPERVLEKAVKGMLPKGPLGYAMLKKLKCYAGAEHPHAAQQPKVLEI.

It belongs to the universal ribosomal protein uL13 family. In terms of assembly, part of the 50S ribosomal subunit.

In terms of biological role, this protein is one of the early assembly proteins of the 50S ribosomal subunit, although it is not seen to bind rRNA by itself. It is important during the early stages of 50S assembly. The polypeptide is Large ribosomal subunit protein uL13 (Azoarcus sp. (strain BH72)).